The sequence spans 637 residues: Biosynthetic arginine decarboxylase (637 aa).

K101 is subject to N6-(pyridoxal phosphate)lysine. 286-296 (FDVGGGLAVDY) is a binding site for substrate.

The protein belongs to the Orn/Lys/Arg decarboxylase class-II family. SpeA subfamily. Mg(2+) is required as a cofactor. It depends on pyridoxal 5'-phosphate as a cofactor.

The catalysed reaction is L-arginine + H(+) = agmatine + CO2. It participates in amine and polyamine biosynthesis; agmatine biosynthesis; agmatine from L-arginine: step 1/1. Its function is as follows. Catalyzes the biosynthesis of agmatine from arginine. The sequence is that of Biosynthetic arginine decarboxylase from Shewanella halifaxensis (strain HAW-EB4).